The sequence spans 137 residues: uncharacterized protein (137 aa).

A run of 2 helical transmembrane segments spans residues 36–52 (LAPP…PFVL) and 113–129 (FYGY…IFCF).

The protein localises to the membrane. This is an uncharacterized protein from Saccharomyces cerevisiae (strain ATCC 204508 / S288c) (Baker's yeast).